A 319-amino-acid chain; its full sequence is Protein quaking-B (319 aa).

Positions 87–153 constitute a KH domain; that stretch reads YVPVKEYPDF…WEHLNEDLHV (67 aa). The SH3-binding motif lies at 276–279; sequence PQTP.

The protein belongs to the quaking family. As to quaternary structure, homodimer; does not require RNA to homodimerize.

Its subcellular location is the cytoplasm. The protein localises to the nucleus. RNA reader protein, which recognizes and binds specific RNAs, thereby regulating RNA metabolic processes, such as pre-mRNA splicing, circular RNA (circRNA) formation, mRNA export, mRNA stability and/or translation. Involved in various cellular processes, such as mRNA storage into stress granules, apoptosis, interferon response, glial cell fate and development. Binds to the 5'-NACUAAY-N(1,20)-UAAY-3' RNA core sequence. Acts as a mRNA modification reader that specifically recognizes and binds mRNA transcripts modified by internal N(7)-methylguanine (m7G). Promotes the formation of circular RNAs (circRNAs): acts by binding to sites flanking circRNA-forming exons. CircRNAs are produced by back-splicing circularization of pre-mRNAs. Required to protect and promote stability of mRNAs which promotes oligodendrocyte differentiation. Acts as an important regulator of muscle development: required during early skeletal myofibril formation by regulating the accumulation of the muscle-specific tropomyosin-3 (tpm3) transcripts. This is Protein quaking-B (qki2) from Danio rerio (Zebrafish).